We begin with the raw amino-acid sequence, 88 residues long: DNA-directed RNA polymerase subunit omega (88 aa).

The protein belongs to the RNA polymerase subunit omega family. In terms of assembly, the RNAP catalytic core consists of 2 alpha, 1 beta, 1 beta' and 1 omega subunit. When a sigma factor is associated with the core the holoenzyme is formed, which can initiate transcription.

It catalyses the reaction RNA(n) + a ribonucleoside 5'-triphosphate = RNA(n+1) + diphosphate. Its function is as follows. Promotes RNA polymerase assembly. Latches the N- and C-terminal regions of the beta' subunit thereby facilitating its interaction with the beta and alpha subunits. In Salinispora tropica (strain ATCC BAA-916 / DSM 44818 / JCM 13857 / NBRC 105044 / CNB-440), this protein is DNA-directed RNA polymerase subunit omega.